The following is a 474-amino-acid chain: Gasdermin-C (474 aa).

The tract at residues 1 to 237 (MLYTFDQVSK…TCAILLSANA (237 aa)) is triggers pyroptosis.

Belongs to the gasdermin family. Homooligomer; homooligomeric ring-shaped pore complex containing 27-28 subunits when inserted in the membrane. In terms of processing, cleavage by CASP8 relieves autoinhibition by releasing the N-terminal moiety (Gasdermin-C, N-terminal) that initiates pyroptosis. Post-translationally, palmitoylated.

Its subcellular location is the cytoplasm. It localises to the cytosol. The protein localises to the cell membrane. With respect to regulation, the full-length protein before cleavage is inactive: intramolecular interactions between N- and C-terminal domains mediate autoinhibition in the absence of activation signal. The intrinsic pyroptosis-inducing activity is carried by the released N-terminal moiety (Gasdermin-C, N-terminal) following cleavage by caspase CASP8. This form constitutes the precursor of the pore-forming protein: upon cleavage, the released N-terminal moiety (Gasdermin-C, N-terminal) binds to membranes and forms pores, triggering pyroptosis. In terms of biological role, pore-forming protein that causes membrane permeabilization and pyroptosis. Produced by the cleavage of gasdermin-C by caspase CASP8 in response to death signals. After cleavage, moves to the plasma membrane where it strongly binds to membrane inner leaflet lipids. Homooligomerizes within the membrane and forms pores of 10-15 nanometers (nm) of inner diameter, triggering pyroptosis. The protein is Gasdermin-C of Rattus norvegicus (Rat).